Reading from the N-terminus, the 367-residue chain is Putative S-adenosyl-L-methionine-dependent methyltransferase MT0751 (367 aa).

S-adenosyl-L-methionine is bound by residues Asp137 and 166–167; that span reads DL. The segment covering 348–358 has biased composition (polar residues); the sequence is TRSDAHQASTT. The interval 348 to 367 is disordered; the sequence is TRSDAHQASTTAPPPPGLTG.

Belongs to the UPF0677 family.

In terms of biological role, exhibits S-adenosyl-L-methionine-dependent methyltransferase activity. The polypeptide is Putative S-adenosyl-L-methionine-dependent methyltransferase MT0751 (Mycobacterium tuberculosis (strain CDC 1551 / Oshkosh)).